A 74-amino-acid chain; its full sequence is Small ribosomal subunit protein uS15 (74 aa).

The protein belongs to the universal ribosomal protein uS15 family. As to quaternary structure, part of the 30S ribosomal subunit. Forms a bridge to the 50S subunit in the 70S ribosome, contacting the 23S rRNA.

Its function is as follows. One of the primary rRNA binding proteins, it binds directly to 16S rRNA where it helps nucleate assembly of the platform of the 30S subunit by binding and bridging several RNA helices of the 16S rRNA. Functionally, forms an intersubunit bridge (bridge B4) with the 23S rRNA of the 50S subunit in the ribosome. The chain is Small ribosomal subunit protein uS15 from Onion yellows phytoplasma (strain OY-M).